We begin with the raw amino-acid sequence, 443 residues long: Trihelix transcription factor ASIL2 (443 aa).

A disordered region spans residues 1–82 (MEDDEDIRSQ…RPTGGGGRED (82 aa)). Positions 38–48 (YSLTPPGNSSQ) are enriched in polar residues. Residues 64 to 78 (SGGGNNSSGRPTGGG) show a composition bias toward gly residues. Residues 84–144 (WSEAATAVLI…QCKNRIDTVK (61 aa)) enclose the Myb-like domain. Disordered regions lie at residues 238–350 (FGGS…GNKW) and 413–443 (RRMG…LGNN). Positions 239–249 (GGSGGGGGGGS) are enriched in gly residues. Over residues 271-286 (TLPQQGRTLPQQQQQG) the composition is skewed to low complexity. The short motif at 290-303 (KRCSESKRWRFRKR) is the Bipartite nuclear localization signal element. The span at 333–350 (MKTEEKKKQDGDGVGNKW) shows a compositional bias: basic and acidic residues. The stretch at 360–414 (FGEAYEQTENAKLQQVVEMEKERMKFLKELELQRMQFFVKTQLEISQLKQQHGRR) forms a coiled coil. A compositionally biased stretch (low complexity) spans 428–443 (NNINAIVNNNNDLGNN).

The protein localises to the nucleus. In terms of biological role, transcription regulator that may repress the maturation program during early embryogenesis. This is Trihelix transcription factor ASIL2 from Arabidopsis thaliana (Mouse-ear cress).